The primary structure comprises 255 residues: Type III pantothenate kinase (255 aa).

6-13 (DIGNTNIK) is an ATP binding site. Substrate is bound at residue 107–110 (GADR). Asp109 serves as the catalytic Proton acceptor. Thr132 contributes to the ATP binding site. Thr184 contributes to the substrate binding site.

Belongs to the type III pantothenate kinase family. As to quaternary structure, homodimer. The cofactor is NH4(+). It depends on K(+) as a cofactor.

It is found in the cytoplasm. The enzyme catalyses (R)-pantothenate + ATP = (R)-4'-phosphopantothenate + ADP + H(+). Its pathway is cofactor biosynthesis; coenzyme A biosynthesis; CoA from (R)-pantothenate: step 1/5. In terms of biological role, catalyzes the phosphorylation of pantothenate (Pan), the first step in CoA biosynthesis. In Roseiflexus sp. (strain RS-1), this protein is Type III pantothenate kinase.